The chain runs to 440 residues: Thymidine phosphorylase (440 aa).

This sequence belongs to the thymidine/pyrimidine-nucleoside phosphorylase family. Homodimer.

It carries out the reaction thymidine + phosphate = 2-deoxy-alpha-D-ribose 1-phosphate + thymine. Its pathway is pyrimidine metabolism; dTMP biosynthesis via salvage pathway; dTMP from thymine: step 1/2. Its function is as follows. The enzymes which catalyze the reversible phosphorolysis of pyrimidine nucleosides are involved in the degradation of these compounds and in their utilization as carbon and energy sources, or in the rescue of pyrimidine bases for nucleotide synthesis. This chain is Thymidine phosphorylase, found in Yersinia enterocolitica serotype O:8 / biotype 1B (strain NCTC 13174 / 8081).